A 328-amino-acid chain; its full sequence is Glucokinase (328 aa).

Alanine 16 to threonine 21 is a binding site for ATP.

Belongs to the bacterial glucokinase family.

The protein localises to the cytoplasm. The catalysed reaction is D-glucose + ATP = D-glucose 6-phosphate + ADP + H(+). This chain is Glucokinase, found in Neisseria meningitidis serogroup C (strain 053442).